The following is a 350-amino-acid chain: Methionine import ATP-binding protein MetN 1 (350 aa).

In terms of domain architecture, ABC transporter spans 12 to 251 (IDLKNITVLF…PSREVTQDFV (240 aa)). Residue 48–55 (GYSGAGKS) participates in ATP binding.

It belongs to the ABC transporter superfamily. Methionine importer (TC 3.A.1.24) family. The complex is composed of two ATP-binding proteins (MetN), two transmembrane proteins (MetI) and a solute-binding protein (MetQ).

Its subcellular location is the cell membrane. It carries out the reaction L-methionine(out) + ATP + H2O = L-methionine(in) + ADP + phosphate + H(+). It catalyses the reaction D-methionine(out) + ATP + H2O = D-methionine(in) + ADP + phosphate + H(+). Its function is as follows. Part of the ABC transporter complex MetNIQ involved in methionine import. Responsible for energy coupling to the transport system. The sequence is that of Methionine import ATP-binding protein MetN 1 from Oenococcus oeni (strain ATCC BAA-331 / PSU-1).